Reading from the N-terminus, the 778-residue chain is Preaspterpenacid I synthase sttA (778 aa).

The interval Ile4–Thr359 is sesterterpenoid synthase. A Mg(2+)-binding site is contributed by Asp105. Asp105 is a substrate binding site. The interval Arg211–Glu214 is substrate. Position 255 (Asn255) interacts with substrate. Substrate regions lie at residues Ser259 to Glu263 and Arg350 to Tyr351. The geranylfarneyl diphosphate synthase stretch occupies residues Ala360–Lys774. Positions Ala423–Thr445 are disordered. A compositionally biased stretch (polar residues) spans Pro429–Thr445. Isopentenyl diphosphate-binding residues include Lys493, Arg496, and His525. Mg(2+) is bound by residues Asp532 and Asp536. Arg541 contributes to the dimethylallyl diphosphate binding site. Arg542 serves as a coordination point for isopentenyl diphosphate. Dimethylallyl diphosphate-binding residues include Lys619, Thr620, Gln657, Asn664, and Lys674.

In the N-terminal section; belongs to the terpene synthase family. This sequence in the C-terminal section; belongs to the FPP/GGPP synthase family.

It carries out the reaction 4 isopentenyl diphosphate + dimethylallyl diphosphate = (2E,6E,10E,14E)-geranylfarnesyl diphosphate + 4 diphosphate. The enzyme catalyses (2E,6E,10E,14E)-geranylfarnesyl diphosphate + H2O = preaspterpenacid acid I + diphosphate. Its pathway is secondary metabolite biosynthesis; terpenoid biosynthesis. Functionally, sesterterpenoid synthase; part of the gene cluster that mediates the biosynthesis of aspterpenacids. Performs both prenyl transferase and terpene cyclase activity, converting isopentenyl diphosphate and dimethylallyl diphosphate into geranylfarnesyl diphosphate (GFPP) and then converting GFPP into preaspterpenacid I. C22-oxidative modification of preaspterpenacid I by the cytochrome P450 monooxygenase sttB then leads to preaspterpenacid II. It has still to be determined how preaspterpenacid II is further modified to produce aspterpenacids. This chain is Preaspterpenacid I synthase sttA, found in Aspergillus terreus.